The chain runs to 285 residues: Lipoyl synthase (285 aa).

Residues Cys-36, Cys-41, Cys-47, Cys-62, Cys-66, Cys-69, and Ser-275 each coordinate [4Fe-4S] cluster. A Radical SAM core domain is found at 48–264 (FSKKTATFLI…KEYAISIGFK (217 aa)).

The protein belongs to the radical SAM superfamily. Lipoyl synthase family. The cofactor is [4Fe-4S] cluster.

The protein localises to the cytoplasm. It carries out the reaction [[Fe-S] cluster scaffold protein carrying a second [4Fe-4S](2+) cluster] + N(6)-octanoyl-L-lysyl-[protein] + 2 oxidized [2Fe-2S]-[ferredoxin] + 2 S-adenosyl-L-methionine + 4 H(+) = [[Fe-S] cluster scaffold protein] + N(6)-[(R)-dihydrolipoyl]-L-lysyl-[protein] + 4 Fe(3+) + 2 hydrogen sulfide + 2 5'-deoxyadenosine + 2 L-methionine + 2 reduced [2Fe-2S]-[ferredoxin]. The protein operates within protein modification; protein lipoylation via endogenous pathway; protein N(6)-(lipoyl)lysine from octanoyl-[acyl-carrier-protein]: step 2/2. In terms of biological role, catalyzes the radical-mediated insertion of two sulfur atoms into the C-6 and C-8 positions of the octanoyl moiety bound to the lipoyl domains of lipoate-dependent enzymes, thereby converting the octanoylated domains into lipoylated derivatives. The polypeptide is Lipoyl synthase (Caldicellulosiruptor saccharolyticus (strain ATCC 43494 / DSM 8903 / Tp8T 6331)).